A 284-amino-acid polypeptide reads, in one-letter code: Shikimate dehydrogenase (NADP(+)) (284 aa).

Residues 20–22 (SIS) and S67 each bind shikimate. The active-site Proton acceptor is K71. Residue D83 participates in NADP(+) binding. N92 and D107 together coordinate shikimate. NADP(+)-binding positions include 129-133 (GAGGA) and I227. Y229 contributes to the shikimate binding site. G250 serves as a coordination point for NADP(+).

It belongs to the shikimate dehydrogenase family. In terms of assembly, homodimer.

It catalyses the reaction shikimate + NADP(+) = 3-dehydroshikimate + NADPH + H(+). The protein operates within metabolic intermediate biosynthesis; chorismate biosynthesis; chorismate from D-erythrose 4-phosphate and phosphoenolpyruvate: step 4/7. In terms of biological role, involved in the biosynthesis of the chorismate, which leads to the biosynthesis of aromatic amino acids. Catalyzes the reversible NADPH linked reduction of 3-dehydroshikimate (DHSA) to yield shikimate (SA). The polypeptide is Shikimate dehydrogenase (NADP(+)) (Streptococcus pneumoniae (strain Taiwan19F-14)).